Here is a 391-residue protein sequence, read N- to C-terminus: MISGAQQYRDKFAVRALVAHNDVAVMIEQCFLVSPQYVCMICEEVARNLKYKLVLMDKNNIQVLSGMKDACVLSALDAVDMVVSTMAGIARLQPIFSAIRVGKKILLANKETLVLSGQLFMTEVYKYNASVLPLDSEYNAIFQNLSVIYQKKLGQVSLSQYGICCIVLTDSGGVLYKITRTKLFKITPVQVYIHPNWSMGLKISVNSATVMNRVLEYIEAHHLFNVSSNEIEILLHTQTIIYATIRYSDGSVLAHFSTPDMKIFIAYAMAYLNKIKLNNISTYSKQYEIYNTYCGNNTLNLDILDTKNYPCLQTAIDASNHSQDSVIVLNADNEVTVEAFLCEMIAFIKIPNFIYRIMNTLNHFQEPSTIDDIIYIDHCIKETEIRYAIGN.

Residue Asn-109 participates in NADPH binding. Residue Lys-110 participates in 1-deoxy-D-xylulose 5-phosphate binding. Glu-111 is a binding site for NADPH. Residue Asp-135 coordinates Mn(2+). Positions 136, 137, 171, and 194 each coordinate 1-deoxy-D-xylulose 5-phosphate. Position 137 (Glu-137) interacts with Mn(2+). Gly-200 contacts NADPH. 4 residues coordinate 1-deoxy-D-xylulose 5-phosphate: Ser-207, Asn-212, Arg-213, and Glu-216. Glu-216 is a Mn(2+) binding site.

This sequence belongs to the DXR family. In terms of assembly, homodimer. The cofactor is Mg(2+). It depends on Mn(2+) as a cofactor.

The enzyme catalyses 2-C-methyl-D-erythritol 4-phosphate + NADP(+) = 1-deoxy-D-xylulose 5-phosphate + NADPH + H(+). Its pathway is isoprenoid biosynthesis; isopentenyl diphosphate biosynthesis via DXP pathway; isopentenyl diphosphate from 1-deoxy-D-xylulose 5-phosphate: step 1/6. Functionally, catalyzes the NADPH-dependent rearrangement and reduction of 1-deoxy-D-xylulose-5-phosphate (DXP) to 2-C-methyl-D-erythritol 4-phosphate (MEP). The sequence is that of 1-deoxy-D-xylulose 5-phosphate reductoisomerase from Blochmanniella floridana.